The sequence spans 203 residues: Ras-related protein Rab-8B (203 aa).

GTP-binding positions include 22–29 (GDSGVGKS), 70–74 (DTAGQ), and 128–131 (NKCD). S-geranylgeranyl cysteine attachment occurs at residues Cys202 and Cys203.

It belongs to the small GTPase superfamily. Rab family.

The protein localises to the cell membrane. In terms of biological role, protein transport. Probably involved in vesicular traffic. This chain is Ras-related protein Rab-8B (rab8B), found in Dictyostelium discoideum (Social amoeba).